Here is a 465-residue protein sequence, read N- to C-terminus: Cytochrome P450 85A1 (465 aa).

Residues 2 to 22 traverse the membrane as a helical segment; sequence GAMMVMMGLLLIIVSLCSALL. A heme-binding site is contributed by C415.

The protein belongs to the cytochrome P450 family. Heme is required as a cofactor. In terms of tissue distribution, mainly expressed in apical shoots, hypocotyls, siliques and roots. Also present in the female gametophyte.

The protein resides in the membrane. It carries out the reaction 6-deoxoteasterone + reduced [NADPH--hemoprotein reductase] + O2 = 6alpha-hydroxyteasterone + oxidized [NADPH--hemoprotein reductase] + H2O + H(+). The enzyme catalyses 6alpha-hydroxytyphasterol + reduced [NADPH--hemoprotein reductase] + O2 = teasterone + oxidized [NADPH--hemoprotein reductase] + 2 H2O + H(+). It catalyses the reaction 3-dehydro-6-deoxoteasterone + reduced [NADPH--hemoprotein reductase] + O2 = 3-dehydro-6alpha-hydroxyteasterone + oxidized [NADPH--hemoprotein reductase] + H2O + H(+). The catalysed reaction is 3-dehydro-6alpha-hydroxyteasterone + reduced [NADPH--hemoprotein reductase] + O2 = 3-dehydroteasterone + oxidized [NADPH--hemoprotein reductase] + 2 H2O + H(+). It carries out the reaction 6-deoxotyphasterol + reduced [NADPH--hemoprotein reductase] + O2 = 6alpha-hydroxytyphasterol + oxidized [NADPH--hemoprotein reductase] + H2O + H(+). The enzyme catalyses 6alpha-hydroxytyphasterol + reduced [NADPH--hemoprotein reductase] + O2 = typhasterol + oxidized [NADPH--hemoprotein reductase] + 2 H2O + H(+). It catalyses the reaction 6-deoxocastasterone + reduced [NADPH--hemoprotein reductase] + O2 = 6alpha-hydroxycastasterone + oxidized [NADPH--hemoprotein reductase] + H2O + H(+). The catalysed reaction is 6alpha-hydroxycastasterone + reduced [NADPH--hemoprotein reductase] + O2 = castasterone + oxidized [NADPH--hemoprotein reductase] + 2 H2O + H(+). It carries out the reaction 6-deoxocastasterone + 2 reduced [NADPH--hemoprotein reductase] + 2 O2 = castasterone + 2 oxidized [NADPH--hemoprotein reductase] + 3 H2O + 2 H(+). The enzyme catalyses 6-deoxoteasterone + 2 reduced [NADPH--hemoprotein reductase] + 2 O2 = teasterone + 2 oxidized [NADPH--hemoprotein reductase] + 3 H2O + 2 H(+). It catalyses the reaction 6-deoxotyphasterol + 2 reduced [NADPH--hemoprotein reductase] + 2 O2 = typhasterol + 2 oxidized [NADPH--hemoprotein reductase] + 3 H2O + 2 H(+). The catalysed reaction is 3-dehydro-6-deoxoteasterone + 2 reduced [NADPH--hemoprotein reductase] + 2 O2 = 3-dehydroteasterone + 2 oxidized [NADPH--hemoprotein reductase] + 3 H2O + 2 H(+). The protein operates within plant hormone biosynthesis; brassinosteroid biosynthesis. Its function is as follows. Catalyzes the C6-oxidation step in brassinosteroids biosynthesis. Converts 6-deoxocastasterone (6-deoxoCS) to castasterone (CS). May also convert 6-deoxoteasterone (6-deoxoTE) to teasterone (TE), 3-dehydro-6-deoxoteasterone (6-deoxo3DT, 6-deoxo-3-DHT) to 3-dehydroteasterone (3DT, 3-DHT), and 6-deoxotyphasterol (6-deoxoTY) to typhasterol (TY). Required for the initiation of female gametogenesis (megagametogenesis). This chain is Cytochrome P450 85A1, found in Arabidopsis thaliana (Mouse-ear cress).